Consider the following 225-residue polypeptide: Transcription factor MYB1 (225 aa).

HTH myb-type domains lie at 11–67 (LGRV…KPSI) and 68–118 (KRGH…YKKH). 2 consecutive DNA-binding regions (H-T-H motif) follow at residues 39 to 63 (WKRV…LNYL) and 91 to 114 (WSLI…NTHL).

No interactions with bHLH.

It localises to the nucleus. Its function is as follows. Activates DODA1 and CYP76AD1 in the betalain red pigment pathway. This chain is Transcription factor MYB1, found in Beta vulgaris (Sugar beet).